The sequence spans 190 residues: Potassium-transporting ATPase KdpC subunit (190 aa).

Residues 13-33 (VGFLLLTLVCGVIYPGVVTII) traverse the membrane as a helical segment.

Belongs to the KdpC family. The system is composed of three essential subunits: KdpA, KdpB and KdpC.

It localises to the cell membrane. Its function is as follows. Part of the high-affinity ATP-driven potassium transport (or Kdp) system, which catalyzes the hydrolysis of ATP coupled with the electrogenic transport of potassium into the cytoplasm. This subunit acts as a catalytic chaperone that increases the ATP-binding affinity of the ATP-hydrolyzing subunit KdpB by the formation of a transient KdpB/KdpC/ATP ternary complex. This is Potassium-transporting ATPase KdpC subunit from Listeria innocua serovar 6a (strain ATCC BAA-680 / CLIP 11262).